Reading from the N-terminus, the 259-residue chain is Snake venom serine proteinase 2 (259 aa).

The signal sequence occupies residues methionine 1–alanine 18. Positions glutamine 19 to leucine 24 are excised as a propeptide. Residues isoleucine 25–alanine 250 form the Peptidase S1 domain. Cystine bridges form between cysteine 31–cysteine 162, cysteine 49–cysteine 65, cysteine 97–cysteine 257, cysteine 141–cysteine 211, cysteine 173–cysteine 190, and cysteine 201–cysteine 226. Active-site charge relay system residues include histidine 64 and aspartate 109. Serine 205 functions as the Charge relay system in the catalytic mechanism.

It belongs to the peptidase S1 family. Snake venom subfamily. Monomer. As to expression, expressed by the venom gland.

The protein localises to the secreted. Functionally, snake venom serine protease that may act in the hemostasis system of the prey. This is Snake venom serine proteinase 2 from Crotalus adamanteus (Eastern diamondback rattlesnake).